The sequence spans 129 residues: Follitropin subunit beta (129 aa).

Positions 1–18 (MKSVQFCFLFCCWRAICC) are cleaved as a signal peptide. 6 cysteine pairs are disulfide-bonded: C21–C69, C35–C84, C38–C122, C46–C100, C50–C102, and C105–C112. Residues N25 and N42 are each glycosylated (N-linked (GlcNAc...) asparagine).

Belongs to the glycoprotein hormones subunit beta family. In terms of assembly, heterodimer. The active follitropin is a heterodimer composed of an alpha chain/CGA shared with other hormones and a unique beta chain/FSHB shown here.

The protein localises to the secreted. In terms of biological role, together with the alpha chain CGA constitutes follitropin, the follicle-stimulating hormone, and provides its biological specificity to the hormone heterodimer. Binds FSHR, a G protein-coupled receptor, on target cells to activate downstream signaling pathways. Follitropin is involved in follicle development and spermatogenesis in reproductive organs. The sequence is that of Follitropin subunit beta (FSHB) from Capra hircus (Goat).